The primary structure comprises 358 residues: Probable protein phosphatase 2C 34 (358 aa).

Positions 62–349 constitute a PPM-type phosphatase domain; it reads LASVFSRRGE…DDISAVCLFF (288 aa). Aspartate 98, glycine 99, aspartate 294, and aspartate 340 together coordinate Mn(2+).

Belongs to the PP2C family. Requires Mg(2+) as cofactor. The cofactor is Mn(2+).

It carries out the reaction O-phospho-L-seryl-[protein] + H2O = L-seryl-[protein] + phosphate. It catalyses the reaction O-phospho-L-threonyl-[protein] + H2O = L-threonyl-[protein] + phosphate. This chain is Probable protein phosphatase 2C 34, found in Arabidopsis thaliana (Mouse-ear cress).